We begin with the raw amino-acid sequence, 272 residues long: MKYRILMATLLAVCLGIFSLSAPAFAAKQTLTYDDIVGTGLANKCPTLDDTARGAYPIDSSQTYRIARLCLQPTTFLVKEEPKNKRQEAEFVPTKLVTRETTSLDQIQGELKVNSDGSLTFVEEDGIDFQPVTVQMAGGERIPLLFTVKNLVASTQPNVTSITTSTDFKGEFNVPSYRTANFLDPKGRGLASGYDSAIALPQAKEEELARANVKRFSLTKGQISLNVAKVDGRTGEIAGTFESEQLSDDDMGAHEPHEVKIQGVFYASIEPA.

The signal sequence occupies residues 1 to 26; the sequence is MKYRILMATLLAVCLGIFSLSAPAFA.

The protein belongs to the PsbO family. In terms of assembly, PSII is composed of 1 copy each of membrane proteins PsbA, PsbB, PsbC, PsbD, PsbE, PsbF, PsbH, PsbI, PsbJ, PsbK, PsbL, PsbM, PsbT, PsbX, PsbY, PsbZ, Psb30/Ycf12, peripheral proteins PsbO, CyanoQ (PsbQ), PsbU, PsbV and a large number of cofactors. It forms dimeric complexes.

The protein localises to the cellular thylakoid membrane. One of the extrinsic, lumenal subunits of photosystem II (PSII), which stabilize and protect the oxygen-evolving complex. PSII is a light-driven water plastoquinone oxidoreductase, using light energy to abstract electrons from H(2)O, generating a proton gradient subsequently used for ATP formation. Required for dimerization of PSII and for binding of PsbQ to PSII. This Synechococcus elongatus protein is Photosystem II extrinsic protein O (psbO).